We begin with the raw amino-acid sequence, 303 residues long: UDP-3-O-acyl-N-acetylglucosamine deacetylase (303 aa).

3 residues coordinate Zn(2+): H79, H238, and D242. Residue H265 is the Proton donor of the active site.

Belongs to the LpxC family. Zn(2+) serves as cofactor.

The catalysed reaction is a UDP-3-O-[(3R)-3-hydroxyacyl]-N-acetyl-alpha-D-glucosamine + H2O = a UDP-3-O-[(3R)-3-hydroxyacyl]-alpha-D-glucosamine + acetate. It participates in glycolipid biosynthesis; lipid IV(A) biosynthesis; lipid IV(A) from (3R)-3-hydroxytetradecanoyl-[acyl-carrier-protein] and UDP-N-acetyl-alpha-D-glucosamine: step 2/6. Catalyzes the hydrolysis of UDP-3-O-myristoyl-N-acetylglucosamine to form UDP-3-O-myristoylglucosamine and acetate, the committed step in lipid A biosynthesis. The protein is UDP-3-O-acyl-N-acetylglucosamine deacetylase of Pseudoalteromonas translucida (strain TAC 125).